The chain runs to 653 residues: MKRVGNCWKASVAAFFLLMFTAFAAADTTSVDTVSYKSNSEFFDGEVLQAGYVSNFATDKINVHLGASEIESKTGATAEEDLTLSVSHQNTYARYPLQETGLKKIYGWEGMKKTFDTKDQLWNWVTSNCADFTEGGVAIGDRTSKVEAAAKSWYDYWTGSYNYQAFCLRKNGYYGDVADIGSPDEIFRTEWRLQAGDKNPQTAIITNGDGGSGVVSNLGRYAKVKWQGNLDTGQNPPLVDDELAIHGNNYEGGWRVISEQRYDNYWNYIKNDGNRLLDKWKSGDYSESYIEGLLNGKAENAQKRYSESPLANAEVLDSSFQSGALKADMDSRLAYPEFNVYVDAGENGYITVSKPVGKPKIVSSSGASFGELSSGRISVDVKNVGGAEGSFSARAGSCSQYFQADALQNTKRVAPGETASYSFRVTFTSTSMQQASYTGRCSITVEDTGSGREVSTSVSVEATQQSECTQGKEIVKQKNGNDVIYSCPDGLKIQKQDTCTGELKAVFVNNDIQYDCREEGTGGGSGGGLFGKRFTLPITGTQLSNPLNAFENIWSGDANALNWLQVFVTFIAFLGGFALVGVKLGKIVDGLATEFIPVKDSHVRLVIGLLGGGMIATAVYQLVTDPLGLLVTVLGLVVMGYLYLSASAPEINL.

Residues 1–24 form the signal peptide; sequence MKRVGNCWKASVAAFFLLMFTAFA. Residues 25–559 lie on the Extracellular side of the membrane; it reads AADTTSVDTV…FENIWSGDAN (535 aa). 4 disulfide bridges follow: C129–C167, C398–C441, C468–C487, and C499–C516. Residues 155–160 are fusion loop; the sequence is DYWTGS. Residues 560–580 traverse the membrane as a helical segment; sequence ALNWLQVFVTFIAFLGGFALV. The Cytoplasmic portion of the chain corresponds to 581–604; it reads GVKLGKIVDGLATEFIPVKDSHVR. The next 2 membrane-spanning stretches (helical) occupy residues 605 to 625 and 626 to 646; these read LVIG…LVTD and PLGL…YLSA. Residues 647–653 lie on the Cytoplasmic side of the membrane; the sequence is SAPEINL.

Belongs to the HAP2/GCS1 family. Fusexin 1 subfamily. In terms of assembly, homotrimer stabilized by interdomain contacts and numerous Ca(2+) and Na(+) ions.

It localises to the cell surface. It is found in the cell membrane. Exhibits fusogenic activity. Mediates cell-cell fusion in mammalian cells (bilateral fusion). This chain is Fusexin 1, found in Haloplanus natans (strain DSM 17983 / JCM 14081 / CGMCC 1.8972 / RE-101).